Here is a 312-residue protein sequence, read N- to C-terminus: Ribosomal RNA small subunit methyltransferase H (312 aa).

S-adenosyl-L-methionine-binding positions include 33 to 35 (AGH), Asp52, Phe79, Asp100, and Gln107.

This sequence belongs to the methyltransferase superfamily. RsmH family.

The protein localises to the cytoplasm. The enzyme catalyses cytidine(1402) in 16S rRNA + S-adenosyl-L-methionine = N(4)-methylcytidine(1402) in 16S rRNA + S-adenosyl-L-homocysteine + H(+). Specifically methylates the N4 position of cytidine in position 1402 (C1402) of 16S rRNA. This chain is Ribosomal RNA small subunit methyltransferase H, found in Finegoldia magna (strain ATCC 29328 / DSM 20472 / WAL 2508) (Peptostreptococcus magnus).